Consider the following 380-residue polypeptide: Cytochrome b (380 aa).

4 helical membrane-spanning segments follow: residues 34-54, 78-99, 114-134, and 179-199; these read FGWL…FLAM, WLLR…YFHI, WNIG…GYVL, and FFTF…IHLL. Residues histidine 84 and histidine 98 each contribute to the heme b site. Heme b contacts are provided by histidine 183 and histidine 197. Residue histidine 202 coordinates a ubiquinone. 4 helical membrane passes run 227-247, 289-309, 321-341, and 348-368; these read FKDL…STFA, LGGV…PIIH, AAKA…WIGG, and FISI…LIIP.

Belongs to the cytochrome b family. The cytochrome bc1 complex contains 3 respiratory subunits (MT-CYB, CYC1 and UQCRFS1), 2 core proteins (UQCRC1 and UQCRC2) and probably 6 low-molecular weight proteins. Heme b is required as a cofactor.

Its subcellular location is the mitochondrion inner membrane. In terms of biological role, component of the ubiquinol-cytochrome c reductase complex (complex III or cytochrome b-c1 complex) that is part of the mitochondrial respiratory chain. The b-c1 complex mediates electron transfer from ubiquinol to cytochrome c. Contributes to the generation of a proton gradient across the mitochondrial membrane that is then used for ATP synthesis. The polypeptide is Cytochrome b (mt-cyb) (Rana dybowskii (Dybovsky's frog)).